Here is a 407-residue protein sequence, read N- to C-terminus: Peptidase T (407 aa).

H81 serves as a coordination point for Zn(2+). D83 is an active-site residue. Zn(2+) is bound at residue D142. The active-site Proton acceptor is the E176. The Zn(2+) site is built by E177, D199, and H381.

Belongs to the peptidase M20B family. It depends on Zn(2+) as a cofactor.

It localises to the cytoplasm. It catalyses the reaction Release of the N-terminal residue from a tripeptide.. Its function is as follows. Cleaves the N-terminal amino acid of tripeptides. The sequence is that of Peptidase T from Streptococcus pneumoniae (strain JJA).